Consider the following 448-residue polypeptide: Signal recognition particle 54 kDa protein (448 aa).

GTP is bound by residues 107-114, 189-193, and 247-250; these read GIQGSGKT, DSAGR, and TKLD.

Belongs to the GTP-binding SRP family. SRP54 subfamily. As to quaternary structure, part of the signal recognition particle protein translocation system, which is composed of SRP and FtsY. Archaeal SRP consists of a 7S RNA molecule of 300 nucleotides and two protein subunits: SRP54 and SRP19.

It is found in the cytoplasm. It catalyses the reaction GTP + H2O = GDP + phosphate + H(+). Its function is as follows. Involved in targeting and insertion of nascent membrane proteins into the cytoplasmic membrane. Binds to the hydrophobic signal sequence of the ribosome-nascent chain (RNC) as it emerges from the ribosomes. The SRP-RNC complex is then targeted to the cytoplasmic membrane where it interacts with the SRP receptor FtsY. The sequence is that of Signal recognition particle 54 kDa protein from Thermococcus kodakarensis (strain ATCC BAA-918 / JCM 12380 / KOD1) (Pyrococcus kodakaraensis (strain KOD1)).